We begin with the raw amino-acid sequence, 395 residues long: F-box/kelch-repeat protein At3g13680 (395 aa).

An F-box domain is found at 1 to 47; that stretch reads MTTMGDLPGDLVEEILSRVPLTSLRAIRSTCQKWNSLSKSQICGRKA. 4 Kelch repeats span residues 154 to 202, 210 to 256, 265 to 314, and 337 to 383; these read ILRI…SLKG, KKET…VSLA, VLYQ…FIDE, and IVYI…LVQL.

The sequence is that of F-box/kelch-repeat protein At3g13680 from Arabidopsis thaliana (Mouse-ear cress).